Consider the following 369-residue polypeptide: MRN complex-interacting protein (369 aa).

Serine 115 carries the phosphoserine modification. Disordered regions lie at residues 122–150 (GGGV…PRKR), 209–245 (PSFT…PCPA), and 282–317 (AQAE…TPMP). The short motif at 148–151 (RKRK) is the Nuclear localization signal (NLS) element. Over residues 221-230 (KGRESSREDL) the composition is skewed to basic and acidic residues. A necessary for the association with the MRN complex region spans residues 223–259 (RESSREDLDTMELVPRGEPPCPAQQVRTMSKWEQCLG).

Belongs to the MRNIP family. As to quaternary structure, associates with the MRE11-RAD50-NBN (MRN) damage-sensing complex; this association is constitutive. Interacts with MRE11. Interacts with NBN. Interacts with RAD50. Phosphorylated; phosphorylation is constitutive and occurs in the absence of any DNA-damaging stimulus. Phosphorylation on Ser-115 is necessary for its nuclear retention.

It localises to the nucleus. It is found in the nucleoplasm. In terms of biological role, plays a role in the cellular response to DNA damage and the maintenance of genome stability through its association with the MRN damage-sensing complex. Promotes chromatin loading and activity of the MRN complex to facilitate subsequent ATM-mediated DNA damage response signaling and DNA repair. The protein is MRN complex-interacting protein of Bos taurus (Bovine).